The following is a 190-amino-acid chain: Imidazole glycerol phosphate synthase subunit HisH (190 aa).

The 189-residue stretch at 2 to 190 folds into the Glutamine amidotransferase type-1 domain; sequence IVGVVDYTVG…IKRFLAVAKR (189 aa). The active-site Nucleophile is the C73. Catalysis depends on residues H169 and E171.

In terms of assembly, heterodimer of HisH and HisF.

It is found in the cytoplasm. It catalyses the reaction 5-[(5-phospho-1-deoxy-D-ribulos-1-ylimino)methylamino]-1-(5-phospho-beta-D-ribosyl)imidazole-4-carboxamide + L-glutamine = D-erythro-1-(imidazol-4-yl)glycerol 3-phosphate + 5-amino-1-(5-phospho-beta-D-ribosyl)imidazole-4-carboxamide + L-glutamate + H(+). The enzyme catalyses L-glutamine + H2O = L-glutamate + NH4(+). It functions in the pathway amino-acid biosynthesis; L-histidine biosynthesis; L-histidine from 5-phospho-alpha-D-ribose 1-diphosphate: step 5/9. IGPS catalyzes the conversion of PRFAR and glutamine to IGP, AICAR and glutamate. The HisH subunit catalyzes the hydrolysis of glutamine to glutamate and ammonia as part of the synthesis of IGP and AICAR. The resulting ammonia molecule is channeled to the active site of HisF. This chain is Imidazole glycerol phosphate synthase subunit HisH, found in Pyrobaculum aerophilum (strain ATCC 51768 / DSM 7523 / JCM 9630 / CIP 104966 / NBRC 100827 / IM2).